A 127-amino-acid polypeptide reads, in one-letter code: Mu-like prophage FluMu protein gp41 (127 aa).

The interval 107–127 is disordered; the sequence is VSRGRLDTADQETGKDLSAVS. The segment covering 110 to 121 has biased composition (basic and acidic residues); it reads GRLDTADQETGK.

It to phage Mu protein gp41.

This chain is Mu-like prophage FluMu protein gp41, found in Haemophilus influenzae (strain ATCC 51907 / DSM 11121 / KW20 / Rd).